Reading from the N-terminus, the 167-residue chain is SsrA-binding protein (167 aa).

Belongs to the SmpB family.

The protein resides in the cytoplasm. In terms of biological role, required for rescue of stalled ribosomes mediated by trans-translation. Binds to transfer-messenger RNA (tmRNA), required for stable association of tmRNA with ribosomes. tmRNA and SmpB together mimic tRNA shape, replacing the anticodon stem-loop with SmpB. tmRNA is encoded by the ssrA gene; the 2 termini fold to resemble tRNA(Ala) and it encodes a 'tag peptide', a short internal open reading frame. During trans-translation Ala-aminoacylated tmRNA acts like a tRNA, entering the A-site of stalled ribosomes, displacing the stalled mRNA. The ribosome then switches to translate the ORF on the tmRNA; the nascent peptide is terminated with the 'tag peptide' encoded by the tmRNA and targeted for degradation. The ribosome is freed to recommence translation, which seems to be the essential function of trans-translation. The polypeptide is SsrA-binding protein (Stenotrophomonas maltophilia (strain R551-3)).